Consider the following 323-residue polypeptide: ADP-L-glycero-D-manno-heptose-6-epimerase (323 aa).

Residues 10 to 11 (FI), 31 to 32 (DN), Lys-38, Lys-53, 75 to 79 (EGACS), and Asn-92 each bind NADP(+). Tyr-139 acts as the Proton acceptor in catalysis. Position 143 (Lys-143) interacts with NADP(+). Asn-168 is a substrate binding site. Residues Val-169 and Lys-177 each contribute to the NADP(+) site. The active-site Proton acceptor is the Lys-177. Residues Asp-179, Lys-186, 200–203 (FGAY), Arg-213, and Tyr-277 contribute to the substrate site.

This sequence belongs to the NAD(P)-dependent epimerase/dehydratase family. HldD subfamily. In terms of assembly, homopentamer. Requires NADP(+) as cofactor.

It catalyses the reaction ADP-D-glycero-beta-D-manno-heptose = ADP-L-glycero-beta-D-manno-heptose. Its pathway is nucleotide-sugar biosynthesis; ADP-L-glycero-beta-D-manno-heptose biosynthesis; ADP-L-glycero-beta-D-manno-heptose from D-glycero-beta-D-manno-heptose 7-phosphate: step 4/4. Catalyzes the interconversion between ADP-D-glycero-beta-D-manno-heptose and ADP-L-glycero-beta-D-manno-heptose via an epimerization at carbon 6 of the heptose. This chain is ADP-L-glycero-D-manno-heptose-6-epimerase, found in Hydrogenovibrio crunogenus (strain DSM 25203 / XCL-2) (Thiomicrospira crunogena).